We begin with the raw amino-acid sequence, 334 residues long: Myo-inositol 2-dehydrogenase (334 aa).

This sequence belongs to the Gfo/Idh/MocA family.

It catalyses the reaction myo-inositol + NAD(+) = scyllo-inosose + NADH + H(+). Its pathway is polyol metabolism; myo-inositol metabolism. Catalyzes the NAD(+)-dependent oxidation of myo-inositol (MI) to 2-keto-myo-inositol (scyllo-inosose), and thus probably functions in a myo-inositol degradation pathway together with IolM, IolN and IolO. Has no activity with scyllo-inositol and much reduced activity (78-fold lower catalytic efficiency) with 1D-chiro-inositol. This Thermotoga maritima (strain ATCC 43589 / DSM 3109 / JCM 10099 / NBRC 100826 / MSB8) protein is Myo-inositol 2-dehydrogenase.